A 149-amino-acid polypeptide reads, in one-letter code: Transthyretin (149 aa).

Positions Met-1–Ala-20 are cleaved as a signal peptide. The residue at position 32 (Cys-32) is a Sulfocysteine. Lys-37 is a binding site for L-thyroxine. Glu-64 carries the post-translational modification 4-carboxyglutamate. L-thyroxine is bound by residues Glu-76 and Ser-139.

This sequence belongs to the transthyretin family. In terms of assembly, homotetramer. Dimer of dimers. In the homotetramer, subunits assemble around a central channel that can accommodate two ligand molecules. Interacts with RBP4. In terms of processing, sulfonation of the reactive cysteine Cys-32 enhances the stability of the native conformation of TTR, avoiding misassembly of the protein leading to amyloid formation. As to expression, detected in plasma (at protein level). Detected in liver.

Its subcellular location is the secreted. Functionally, thyroid hormone-binding protein. Probably transports thyroxine from the bloodstream to the brain. This is Transthyretin (TTR) from Petaurus breviceps (Australian sugar glider).